A 404-amino-acid polypeptide reads, in one-letter code: Succinyl-diaminopimelate desuccinylase (404 aa).

H80 lines the Zn(2+) pocket. Residue D82 is part of the active site. Zn(2+) is bound at residue D113. E147 acts as the Proton acceptor in catalysis. Positions 148, 176, and 373 each coordinate Zn(2+).

It belongs to the peptidase M20A family. DapE subfamily. In terms of assembly, homodimer. Zn(2+) serves as cofactor. Requires Co(2+) as cofactor.

It catalyses the reaction N-succinyl-(2S,6S)-2,6-diaminopimelate + H2O = (2S,6S)-2,6-diaminopimelate + succinate. Its pathway is amino-acid biosynthesis; L-lysine biosynthesis via DAP pathway; LL-2,6-diaminopimelate from (S)-tetrahydrodipicolinate (succinylase route): step 3/3. In terms of biological role, catalyzes the hydrolysis of N-succinyl-L,L-diaminopimelic acid (SDAP), forming succinate and LL-2,6-diaminopimelate (DAP), an intermediate involved in the bacterial biosynthesis of lysine and meso-diaminopimelic acid, an essential component of bacterial cell walls. This is Succinyl-diaminopimelate desuccinylase from Allorhizobium ampelinum (strain ATCC BAA-846 / DSM 112012 / S4) (Agrobacterium vitis (strain S4)).